We begin with the raw amino-acid sequence, 321 residues long: ATP-dependent 6-phosphofructokinase (321 aa).

Gly-12 is an ATP binding site. Residues 22–26 (RGVVR) and 55–60 (RYSVSD) each bind ADP. Residues 73–74 (RF) and 103–106 (GDGS) each bind ATP. Asp-104 is a Mg(2+) binding site. 127 to 129 (TID) provides a ligand contact to substrate. Catalysis depends on Asp-129, which acts as the Proton acceptor. Arg-156 lines the ADP pocket. Residues Arg-164 and 171–173 (MGR) each bind substrate. ADP contacts are provided by residues 187–189 (GCE) and 215–217 (KRH). Substrate is bound by residues Glu-224, Arg-245, and 251–254 (HVQR).

The protein belongs to the phosphofructokinase type A (PFKA) family. ATP-dependent PFK group I subfamily. Prokaryotic clade 'B1' sub-subfamily. In terms of assembly, homotetramer. The cofactor is Mg(2+).

It is found in the cytoplasm. The enzyme catalyses beta-D-fructose 6-phosphate + ATP = beta-D-fructose 1,6-bisphosphate + ADP + H(+). Its pathway is carbohydrate degradation; glycolysis; D-glyceraldehyde 3-phosphate and glycerone phosphate from D-glucose: step 3/4. With respect to regulation, allosterically activated by ADP and other diphosphonucleosides, and allosterically inhibited by phosphoenolpyruvate. Catalyzes the phosphorylation of D-fructose 6-phosphate to fructose 1,6-bisphosphate by ATP, the first committing step of glycolysis. This chain is ATP-dependent 6-phosphofructokinase, found in Mannheimia succiniciproducens (strain KCTC 0769BP / MBEL55E).